Consider the following 407-residue polypeptide: Bifunctional enzyme IspD/IspF (407 aa).

The segment at 1 to 247 (MVHIQADGAR…RLSHNALPDV (247 aa)) is 2-C-methyl-D-erythritol 4-phosphate cytidylyltransferase. The interval 248–407 (RTGNGYDVHQ…ATVVFQGKPQ (160 aa)) is 2-C-methyl-D-erythritol 2,4-cyclodiphosphate synthase. A divalent metal cation contacts are provided by Asp254 and His256. Residues 254 to 256 (DVH) and 280 to 281 (HS) each bind 4-CDP-2-C-methyl-D-erythritol 2-phosphate. A divalent metal cation is bound at residue His288. Residues 302 to 304 (DIG), 378 to 381 (TTNE), Phe385, and Arg388 contribute to the 4-CDP-2-C-methyl-D-erythritol 2-phosphate site.

The protein in the N-terminal section; belongs to the IspD/TarI cytidylyltransferase family. IspD subfamily. In the C-terminal section; belongs to the IspF family. The cofactor is a divalent metal cation.

It carries out the reaction 2-C-methyl-D-erythritol 4-phosphate + CTP + H(+) = 4-CDP-2-C-methyl-D-erythritol + diphosphate. The enzyme catalyses 4-CDP-2-C-methyl-D-erythritol 2-phosphate = 2-C-methyl-D-erythritol 2,4-cyclic diphosphate + CMP. It participates in isoprenoid biosynthesis; isopentenyl diphosphate biosynthesis via DXP pathway; isopentenyl diphosphate from 1-deoxy-D-xylulose 5-phosphate: step 2/6. Its pathway is isoprenoid biosynthesis; isopentenyl diphosphate biosynthesis via DXP pathway; isopentenyl diphosphate from 1-deoxy-D-xylulose 5-phosphate: step 4/6. Functionally, bifunctional enzyme that catalyzes the formation of 4-diphosphocytidyl-2-C-methyl-D-erythritol from CTP and 2-C-methyl-D-erythritol 4-phosphate (MEP) (IspD), and catalyzes the conversion of 4-diphosphocytidyl-2-C-methyl-D-erythritol 2-phosphate (CDP-ME2P) to 2-C-methyl-D-erythritol 2,4-cyclodiphosphate (ME-CPP) with a corresponding release of cytidine 5-monophosphate (CMP) (IspF). The polypeptide is Bifunctional enzyme IspD/IspF (Allorhizobium ampelinum (strain ATCC BAA-846 / DSM 112012 / S4) (Agrobacterium vitis (strain S4))).